A 638-amino-acid chain; its full sequence is Keratin, type II cytoskeletal 2 oral (638 aa).

The interval 1–182 (MNRQVCKKSF…DPQIGQVKAQ (182 aa)) is head. An omega-N-methylarginine mark is found at arginine 85 and arginine 110. The tract at residues 183 to 218 (EREQIKTLNNKFASFIDKVRFLEQQNKVLETKWELL) is coil 1A. Residues 183 to 496 (EREQIKTLNN…KLLEGEECRM (314 aa)) form the IF rod domain. Residues 219–237 (QQQTTGSGPSSLEPCFESY) are linker 1. The coil 1B stretch occupies residues 238-329 (ISFLCKQLDS…TLYEMELSQM (92 aa)). The interval 330–353 (QSHASDTSVVLSMDNNRCLDLGSI) is linker 12. Residues 354-492 (IAEVRAQYEE…ATYRKLLEGE (139 aa)) form a coil 2 region. The tract at residues 493–638 (ECRMSGECQS…TSSSQHSSTK (146 aa)) is tail. The disordered stretch occupies residues 532–638 (SGSGGYKGGS…TSSSQHSSTK (107 aa)). Over residues 540-549 (GSSSSSSSGY) the composition is skewed to low complexity. Positions 550 to 572 (GVSGGSGSGYGGVSSGSTGGRGS) are enriched in gly residues. The span at 573 to 583 (SGSYQSSSSGS) shows a compositional bias: low complexity. Arginine 584 bears the Omega-N-methylarginine mark. Over residues 590 to 608 (SISVSHSGMGSSSGSIQTS) the composition is skewed to low complexity. Over residues 609–620 (GGSGYKSGGGGS) the composition is skewed to gly residues. Residues 626-638 (SQTTSSSQHSSTK) are compositionally biased toward low complexity.

This sequence belongs to the intermediate filament family. Heterotetramer of two type I and two type II keratins.

Probably contributes to terminal cornification. In Homo sapiens (Human), this protein is Keratin, type II cytoskeletal 2 oral (KRT76).